A 543-amino-acid polypeptide reads, in one-letter code: CTP synthase (543 aa).

The amidoligase domain stretch occupies residues 1–265 (MARYIFITGG…DEEVLAAFGI (265 aa)). Serine 13 contributes to the CTP binding site. Serine 13 provides a ligand contact to UTP. Residue 14–19 (SLGKGL) participates in ATP binding. Tyrosine 54 serves as a coordination point for L-glutamine. Aspartate 71 is a binding site for ATP. Residues aspartate 71 and glutamate 139 each contribute to the Mg(2+) site. CTP contacts are provided by residues 146 to 148 (DIE), 186 to 191 (KTKPTQ), and lysine 222. Residues 186-191 (KTKPTQ) and lysine 222 contribute to the UTP site. 238–240 (RDA) is a binding site for ATP. A Glutamine amidotransferase type-1 domain is found at 291–542 (TIAIVGKYTG…IEAAMAQSRL (252 aa)). Glycine 353 provides a ligand contact to L-glutamine. Cysteine 380 (nucleophile; for glutamine hydrolysis) is an active-site residue. L-glutamine-binding positions include 381–384 (FGMQ), glutamate 404, and arginine 470. Active-site residues include histidine 515 and glutamate 517.

This sequence belongs to the CTP synthase family. In terms of assembly, homotetramer.

It carries out the reaction UTP + L-glutamine + ATP + H2O = CTP + L-glutamate + ADP + phosphate + 2 H(+). It catalyses the reaction L-glutamine + H2O = L-glutamate + NH4(+). The catalysed reaction is UTP + NH4(+) + ATP = CTP + ADP + phosphate + 2 H(+). Its pathway is pyrimidine metabolism; CTP biosynthesis via de novo pathway; CTP from UDP: step 2/2. With respect to regulation, allosterically activated by GTP, when glutamine is the substrate; GTP has no effect on the reaction when ammonia is the substrate. The allosteric effector GTP functions by stabilizing the protein conformation that binds the tetrahedral intermediate(s) formed during glutamine hydrolysis. Inhibited by the product CTP, via allosteric rather than competitive inhibition. Functionally, catalyzes the ATP-dependent amination of UTP to CTP with either L-glutamine or ammonia as the source of nitrogen. Regulates intracellular CTP levels through interactions with the four ribonucleotide triphosphates. The chain is CTP synthase from Rhodopseudomonas palustris (strain BisA53).